A 169-amino-acid polypeptide reads, in one-letter code: N-alpha-acetyltransferase 50 (169 aa).

An N-acetyltransferase domain is found at 5–154; sequence IELGDVTPHN…DAHVLQKNLK (150 aa). Tyr-30 contributes to the substrate binding site. Residue Tyr-72 is part of the active site. Residue Met-74 coordinates substrate. 76–89 is a binding site for acetyl-CoA; the sequence is LGCLAPYRRLGIGT. 78-89 serves as a coordination point for CoA; sequence CLAPYRRLGIGT. His-111 is a catalytic residue. 116 to 125 lines the CoA pocket; that stretch reads NESAIDFYRK. Positions 137–140 are substrate; the sequence is YYKR.

It belongs to the acetyltransferase family. GNAT subfamily.

The protein localises to the cytoplasm. It localises to the nucleus. It carries out the reaction N-terminal L-methionyl-L-alanyl-[protein] + acetyl-CoA = N-terminal N(alpha)-acetyl-L-methionyl-L-alanyl-[protein] + CoA + H(+). The catalysed reaction is N-terminal L-methionyl-L-seryl-[protein] + acetyl-CoA = N-terminal N(alpha)-acetyl-L-methionyl-L-seryl-[protein] + CoA + H(+). It catalyses the reaction N-terminal L-methionyl-L-valyl-[protein] + acetyl-CoA = N-terminal N(alpha)-acetyl-L-methionyl-L-valyl-[protein] + CoA + H(+). The enzyme catalyses N-terminal L-methionyl-L-threonyl-[protein] + acetyl-CoA = N-terminal N(alpha)-acetyl-L-methionyl-L-threonyl-[protein] + CoA + H(+). It carries out the reaction N-terminal L-methionyl-L-lysyl-[protein] + acetyl-CoA = N-terminal N(alpha)-acetyl-L-methionyl-L-lysyl-[protein] + CoA + H(+). The catalysed reaction is N-terminal L-methionyl-L-leucyl-[protein] + acetyl-CoA = N-terminal N(alpha)-acetyl-L-methionyl-L-leucyl-[protein] + CoA + H(+). It catalyses the reaction N-terminal L-methionyl-L-phenylalanyl-[protein] + acetyl-CoA = N-terminal N(alpha)-acetyl-L-methionyl-L-phenylalanyl-[protein] + CoA + H(+). The enzyme catalyses N-terminal L-methionyl-L-tyrosyl-[protein] + acetyl-CoA = N-terminal N(alpha)-acetyl-L-methionyl-L-tyrosyl-[protein] + CoA + H(+). Functionally, N-alpha-acetyltransferase that acetylates the N-terminus of proteins that retain their initiating methionine. Has a broad substrate specificity: able to acetylate the initiator methionine of most peptides, except for those with a proline in second position. Also displays N-epsilon-acetyltransferase activity by mediating acetylation of the side chain of specific lysines on proteins. The relevance of N-epsilon-acetyltransferase activity is however unclear. Required for sister chromatid cohesion during mitosis by promoting binding of CDCA5/sororin to cohesin. This is N-alpha-acetyltransferase 50 (naa50) from Xenopus tropicalis (Western clawed frog).